The primary structure comprises 310 residues: tRNA-cytidine(32) 2-sulfurtransferase (310 aa).

Positions 45–50 (SGGKDS) match the PP-loop motif motif. [4Fe-4S] cluster is bound by residues C120, C123, and C211.

The protein belongs to the TtcA family. Homodimer. Mg(2+) serves as cofactor. It depends on [4Fe-4S] cluster as a cofactor.

It is found in the cytoplasm. The catalysed reaction is cytidine(32) in tRNA + S-sulfanyl-L-cysteinyl-[cysteine desulfurase] + AH2 + ATP = 2-thiocytidine(32) in tRNA + L-cysteinyl-[cysteine desulfurase] + A + AMP + diphosphate + H(+). Its pathway is tRNA modification. Its function is as follows. Catalyzes the ATP-dependent 2-thiolation of cytidine in position 32 of tRNA, to form 2-thiocytidine (s(2)C32). The sulfur atoms are provided by the cysteine/cysteine desulfurase (IscS) system. This Shewanella putrefaciens (strain CN-32 / ATCC BAA-453) protein is tRNA-cytidine(32) 2-sulfurtransferase.